The following is a 412-amino-acid chain: O-acetyl-L-homoserine sulfhydrylase 2 (412 aa).

The residue at position 202 (K202) is an N6-(pyridoxal phosphate)lysine.

Belongs to the trans-sulfuration enzymes family. In terms of assembly, homotetramer. It depends on pyridoxal 5'-phosphate as a cofactor.

The catalysed reaction is O-acetyl-L-homoserine + hydrogen sulfide = L-homocysteine + acetate. Its activity is regulated as follows. Inhibited by the carbonyl reagents hydroxylamine and phenylhydrazine. Also inhibited by methionine and propargylglycine. In terms of biological role, catalyzes the conversion of O-acetyl-L-homoserine (OAH) into homocysteine in the methionine biosynthesis pathway. Has weak activity with O-acetyl-L-serine, O-phospho-L-serine, L-serine, O-succinyl-L-homoserine and L-homoserine. Shows a very low CTT gamma-synthase activity. This is O-acetyl-L-homoserine sulfhydrylase 2 from Thermus thermophilus (strain ATCC 27634 / DSM 579 / HB8).